The primary structure comprises 550 residues: Acetyl-coenzyme A transporter 1 (550 aa).

2 stretches are compositionally biased toward basic and acidic residues: residues Met1–Arg12 and Asp36–Leu52. Residues Met1–Pro58 form a disordered region. Residues Met1–Ser74 lie on the Cytoplasmic side of the membrane. Ser42 bears the Phosphoserine mark. Residues Ile75–Ile95 traverse the membrane as a helical segment. Topologically, residues Pro96–Ser113 are extracellular. Residue Asn103 is glycosylated (N-linked (GlcNAc...) asparagine). The chain crosses the membrane as a helical span at residues Phe114–Phe134. Over Lys135 to Lys141 the chain is Cytoplasmic. The helical transmembrane segment at Ser142–Val162 threads the bilayer. The Extracellular segment spans residues Asp163–Asp175. The helical transmembrane segment at Val176 to Ala196 threads the bilayer. Over Val197–Asn217 the chain is Cytoplasmic. The chain crosses the membrane as a helical span at residues Ser218 to Ala238. At Asp239 to Thr256 the chain is on the extracellular side. The helical transmembrane segment at Leu257–Leu277 threads the bilayer. Residues Leu278–Lys300 are Cytoplasmic-facing. The helical transmembrane segment at Leu301 to Ser321 threads the bilayer. Residues Lys322–Glu344 lie on the Extracellular side of the membrane. A helical membrane pass occupies residues His345–Ser365. The Cytoplasmic portion of the chain corresponds to Lys366–Asn375. Residues Ile376 to Trp396 form a helical membrane-spanning segment. Residues Trp397–Gly405 lie on the Extracellular side of the membrane. Residues Gly406–Leu426 form a helical membrane-spanning segment. The Cytoplasmic segment spans residues Tyr427 to Asp509. A helical transmembrane segment spans residues Gly510–Gly530. The Extracellular segment spans residues Pro531 to Asn550.

This sequence belongs to the SLC33A transporter family. In terms of assembly, homodimerizes. Expressed in all adult tissues examined including brain, heart, kidney, liver and spleen, with maximum expression in liver and kidney.

The protein resides in the endoplasmic reticulum membrane. It carries out the reaction acetyl-CoA(in) = acetyl-CoA(out). In terms of biological role, acetyl-CoA transporter that mediates active acetyl-CoA import through the endoplasmic reticulum (ER) membrane into the ER lumen where specific ER-based acetyl-CoA:lysine acetyltransferases are responsible for the acetylation of ER-based protein substrate, such as BACE1. Necessary for O-acetylation of gangliosides. In Mus musculus (Mouse), this protein is Acetyl-coenzyme A transporter 1 (Slc33a1).